The following is a 387-amino-acid chain: 1,3-propanediol dehydrogenase (387 aa).

This sequence belongs to the iron-containing alcohol dehydrogenase family. In terms of assembly, homooctamer. The cofactor is Fe cation.

It carries out the reaction propane-1,3-diol + NAD(+) = 3-hydroxypropanal + NADH + H(+). The chain is 1,3-propanediol dehydrogenase (dhaT) from Klebsiella pneumoniae.